Reading from the N-terminus, the 137-residue chain is Probable DNA-directed RNA polymerases I, II, and III subunit RPABC2 (137 aa).

Acidic residues-rich tracts occupy residues 1-27 (MADEDDYQDMDNDDFVDDNEMEDVIEE) and 34-43 (NEDEDDDNVD). Residues 1-43 (MADEDDYQDMDNDDFVDDNEMEDVIEEDPQRPDNEDEDDDNVD) are disordered.

Belongs to the archaeal Rpo6/eukaryotic RPB6 RNA polymerase subunit family. In terms of assembly, component of the RNA polymerase I (Pol I), RNA polymerase II (Pol II) and RNA polymerase III (Pol III) complexes consisting of at least 13, 12 and 17 subunits, respectively.

It is found in the nucleus. Its function is as follows. DNA-dependent RNA polymerases catalyze the transcription of DNA into RNA using the four ribonucleoside triphosphates as substrates. Common component of RNA polymerases I, II and III which synthesize ribosomal RNA precursors, mRNA precursors and many functional non-coding RNAs, and small RNAs, such as 5S rRNA and tRNAs, respectively. Pol II is the central component of the basal RNA polymerase II transcription machinery. Pols are composed of mobile elements that move relative to each other. In Pol II, RPB6 is part of the clamp element and together with parts of RPB1 and RPB2 forms a pocket to which the RPB4-RPB7 subcomplex binds. This Caenorhabditis elegans protein is Probable DNA-directed RNA polymerases I, II, and III subunit RPABC2 (rpb-6).